Here is a 671-residue protein sequence, read N- to C-terminus: DNA ligase (671 aa).

NAD(+) contacts are provided by residues 32–36, 81–82, and E113; these read DAEYD and SL. Residue K115 is the N6-AMP-lysine intermediate of the active site. Positions 136, 173, 290, and 314 each coordinate NAD(+). Residues C408, C411, C426, and C432 each contribute to the Zn(2+) site. The region spanning 593–671 is the BRCT domain; that stretch reads EIDSPFAGKT…EAEMLRLLGS (79 aa).

The protein belongs to the NAD-dependent DNA ligase family. LigA subfamily. Requires Mg(2+) as cofactor. It depends on Mn(2+) as a cofactor.

It carries out the reaction NAD(+) + (deoxyribonucleotide)n-3'-hydroxyl + 5'-phospho-(deoxyribonucleotide)m = (deoxyribonucleotide)n+m + AMP + beta-nicotinamide D-nucleotide.. Its function is as follows. DNA ligase that catalyzes the formation of phosphodiester linkages between 5'-phosphoryl and 3'-hydroxyl groups in double-stranded DNA using NAD as a coenzyme and as the energy source for the reaction. It is essential for DNA replication and repair of damaged DNA. The protein is DNA ligase of Shigella dysenteriae serotype 1 (strain Sd197).